The chain runs to 230 residues: MAHPSQLGFQDAASPVMEELIHFHDHTLMIVFLISTLVLYIITAMVSTKLTNKYILDSQEIEIVWTILPAIILIMIALPSLRILYLMDEINDPHLTIKAMGHQWYWSYEYTDYEDLGFDSYMIQTQDLTPGQFRLLETDHRMVVPMESPIRVLVSAEDVLHAWAVPALGVKMDAVPGRLNQTAFIISRPGVYYGQCSEICGANHSFMPIVVEAVPLEHFETWSSLMLEEA.

Residues 1–14 (MAHPSQLGFQDAAS) are Mitochondrial intermembrane-facing. Residues 15 to 45 (PVMEELIHFHDHTLMIVFLISTLVLYIITAM) traverse the membrane as a helical segment. Residues 46–59 (VSTKLTNKYILDSQ) lie on the Mitochondrial matrix side of the membrane. A helical transmembrane segment spans residues 60–87 (EIEIVWTILPAIILIMIALPSLRILYLM). Topologically, residues 88–230 (DEINDPHLTI…TWSSLMLEEA (143 aa)) are mitochondrial intermembrane. 6 residues coordinate Cu cation: His161, Cys196, Glu198, Cys200, His204, and Met207. Glu198 lines the Mg(2+) pocket.

The protein belongs to the cytochrome c oxidase subunit 2 family. In terms of assembly, component of the cytochrome c oxidase (complex IV, CIV), a multisubunit enzyme composed of 14 subunits. The complex is composed of a catalytic core of 3 subunits MT-CO1, MT-CO2 and MT-CO3, encoded in the mitochondrial DNA, and 11 supernumerary subunits COX4I, COX5A, COX5B, COX6A, COX6B, COX6C, COX7A, COX7B, COX7C, COX8 and NDUFA4, which are encoded in the nuclear genome. The complex exists as a monomer or a dimer and forms supercomplexes (SCs) in the inner mitochondrial membrane with NADH-ubiquinone oxidoreductase (complex I, CI) and ubiquinol-cytochrome c oxidoreductase (cytochrome b-c1 complex, complex III, CIII), resulting in different assemblies (supercomplex SCI(1)III(2)IV(1) and megacomplex MCI(2)III(2)IV(2)). Found in a complex with TMEM177, COA6, COX18, COX20, SCO1 and SCO2. Interacts with TMEM177 in a COX20-dependent manner. Interacts with COX20. Interacts with COX16. The cofactor is Cu cation.

It localises to the mitochondrion inner membrane. It catalyses the reaction 4 Fe(II)-[cytochrome c] + O2 + 8 H(+)(in) = 4 Fe(III)-[cytochrome c] + 2 H2O + 4 H(+)(out). Its function is as follows. Component of the cytochrome c oxidase, the last enzyme in the mitochondrial electron transport chain which drives oxidative phosphorylation. The respiratory chain contains 3 multisubunit complexes succinate dehydrogenase (complex II, CII), ubiquinol-cytochrome c oxidoreductase (cytochrome b-c1 complex, complex III, CIII) and cytochrome c oxidase (complex IV, CIV), that cooperate to transfer electrons derived from NADH and succinate to molecular oxygen, creating an electrochemical gradient over the inner membrane that drives transmembrane transport and the ATP synthase. Cytochrome c oxidase is the component of the respiratory chain that catalyzes the reduction of oxygen to water. Electrons originating from reduced cytochrome c in the intermembrane space (IMS) are transferred via the dinuclear copper A center (CU(A)) of subunit 2 and heme A of subunit 1 to the active site in subunit 1, a binuclear center (BNC) formed by heme A3 and copper B (CU(B)). The BNC reduces molecular oxygen to 2 water molecules using 4 electrons from cytochrome c in the IMS and 4 protons from the mitochondrial matrix. The polypeptide is Cytochrome c oxidase subunit 2 (MT-CO2) (Scyliorhinus canicula (Small-spotted catshark)).